Reading from the N-terminus, the 238-residue chain is Large ribosomal subunit protein uL5c (238 aa).

Belongs to the universal ribosomal protein uL5 family. In terms of assembly, part of the 50S ribosomal subunit; contacts the 5S rRNA.

Its subcellular location is the plastid. The protein resides in the chloroplast. Binds 5S rRNA, forms part of the central protuberance of the 50S subunit. The sequence is that of Large ribosomal subunit protein uL5c (rpl5) from Phaeodactylum tricornutum (strain CCAP 1055/1).